Reading from the N-terminus, the 434-residue chain is Serine--tRNA ligase (434 aa).

230-232 (TSE) contributes to the L-serine binding site. Residues 261-263 (RRE) and valine 277 each bind ATP. Glutamate 284 is an L-serine binding site. 348 to 351 (ELTS) lines the ATP pocket. Residue threonine 393 participates in L-serine binding.

This sequence belongs to the class-II aminoacyl-tRNA synthetase family. Type-1 seryl-tRNA synthetase subfamily. In terms of assembly, homodimer. The tRNA molecule binds across the dimer.

It is found in the cytoplasm. The enzyme catalyses tRNA(Ser) + L-serine + ATP = L-seryl-tRNA(Ser) + AMP + diphosphate + H(+). It catalyses the reaction tRNA(Sec) + L-serine + ATP = L-seryl-tRNA(Sec) + AMP + diphosphate + H(+). The protein operates within aminoacyl-tRNA biosynthesis; selenocysteinyl-tRNA(Sec) biosynthesis; L-seryl-tRNA(Sec) from L-serine and tRNA(Sec): step 1/1. Catalyzes the attachment of serine to tRNA(Ser). Is also able to aminoacylate tRNA(Sec) with serine, to form the misacylated tRNA L-seryl-tRNA(Sec), which will be further converted into selenocysteinyl-tRNA(Sec). This chain is Serine--tRNA ligase, found in Kocuria rhizophila (strain ATCC 9341 / DSM 348 / NBRC 103217 / DC2201).